A 471-amino-acid chain; its full sequence is Putative multidrug resistance protein MdtD (471 aa).

Helical transmembrane passes span 12–32 (LWIV…VNTA), 49–69 (MIIV…GWLA), 77–97 (IFFT…QAST), 106–126 (VLQG…VMKI), 138–158 (FVTL…GVLV), 165–185 (WIFL…LCLM), 195–215 (FDLS…LALD), 220–240 (LGIS…ALLL), 263–283 (FSLG…LPFM), 286–306 (VFLQ…MIPM), 342–362 (LLFM…VLFL), 393–413 (LLSM…GLLL), and 431–451 (VFLY…LIFS).

This sequence belongs to the major facilitator superfamily. TCR/Tet family.

The protein resides in the cell inner membrane. The polypeptide is Putative multidrug resistance protein MdtD (Klebsiella pneumoniae (strain 342)).